We begin with the raw amino-acid sequence, 652 residues long: Putative glycine--tRNA ligase (652 aa).

The disordered stretch occupies residues Gly-119–Val-145. Glu-221 contributes to the glycine binding site. Residues Arg-253 to Glu-255 and Arg-264 to Val-265 contribute to the ATP site. Glu-272 serves as a coordination point for glycine. Residue Glu-380 to Cys-381 participates in ATP binding. Glu-499 to Ser-501 is a glycine binding site. Arg-506 lines the ATP pocket.

It belongs to the class-II aminoacyl-tRNA synthetase family. Homodimer.

The protein resides in the cytoplasm. The catalysed reaction is tRNA(Gly) + glycine + ATP = glycyl-tRNA(Gly) + AMP + diphosphate. It carries out the reaction 2 ATP + H(+) = P(1),P(4)-bis(5'-adenosyl) tetraphosphate + diphosphate. Functionally, catalyzes the ATP-dependent ligation of glycine to the 3'-end of its cognate tRNA, via the formation of an aminoacyl-adenylate intermediate (Gly-AMP). Also produces diadenosine tetraphosphate (Ap4A), a universal pleiotropic signaling molecule needed for cell regulation pathways, by direct condensation of 2 ATPs. Thereby, may play a special role in Ap4A homeostasis. This chain is Putative glycine--tRNA ligase (grs1), found in Schizosaccharomyces pombe (strain 972 / ATCC 24843) (Fission yeast).